Here is a 604-residue protein sequence, read N- to C-terminus: Kelch-like protein 15 (604 aa).

One can recognise a BTB domain in the interval 31 to 98 (LDVTLLIEEH…MYYGSLELSM (68 aa)). Residues 133-237 (CAEVMRLLED…TPANIFEKVK (105 aa)) form the BACK domain. Kelch repeat units follow at residues 328–379 (FAFL…VIGK), 381–426 (IYAV…VLNG), 428–473 (LYIT…NKSK), 489–542 (KLYV…VLDK), and 544–592 (IMVL…SLHF).

It localises to the nucleus. It functions in the pathway protein modification; protein ubiquitination. Its function is as follows. Substrate-specific adapter for an E3 ubiquitin-protein ligase complex. In Danio rerio (Zebrafish), this protein is Kelch-like protein 15 (klhl15).